The following is a 375-amino-acid chain: Growth/differentiation factor 8 (375 aa).

The signal sequence occupies residues 1-23 (MQKLQIFVYIYLFMLLVAGPVDL). A propeptide spanning residues 24-266 (NENSEQKENV…VTDTPKRSRR (243 aa)) is cleaved from the precursor. N-linked (GlcNAc...) asparagine glycosylation is found at asparagine 48 and asparagine 71. 4 cysteine pairs are disulfide-bonded: cysteine 272/cysteine 282, cysteine 281/cysteine 340, cysteine 309/cysteine 372, and cysteine 313/cysteine 374.

The protein belongs to the TGF-beta family. As to quaternary structure, homodimer; disulfide-linked. Interacts with WFIKKN2, leading to inhibit its activity. Interacts with FSTL3. In terms of processing, synthesized as large precursor molecule that undergoes proteolytic cleavage to generate an N-terminal propeptide and a disulfide linked C-terminal dimer, which is the biologically active molecule. The circulating form consists of a latent complex of the C-terminal dimer and other proteins, including its propeptide, which maintain the C-terminal dimer in a latent, inactive state. Ligand activation requires additional cleavage of the prodomain by a tolloid-like metalloproteinase.

It localises to the secreted. Acts specifically as a negative regulator of skeletal muscle growth. This chain is Growth/differentiation factor 8 (MSTN), found in Ovis aries (Sheep).